We begin with the raw amino-acid sequence, 70 residues long: Conotoxin Lt11.6 (70 aa).

An N-terminal signal peptide occupies residues 1–26; that stretch reads MMFRLTSVGSFLLVIVFLNLVVLTNA. 4 cysteine pairs are disulfide-bonded: cysteine 27-cysteine 41, cysteine 34-cysteine 46, cysteine 40-cysteine 50, and cysteine 45-cysteine 54. Residues 58–70 constitute a propeptide that is removed on maturation; the sequence is AQRQKLLRSFGQR.

This sequence belongs to the conotoxin I2 superfamily. Expressed by the venom duct.

It localises to the secreted. The chain is Conotoxin Lt11.6 from Conus litteratus (Lettered cone).